The primary structure comprises 292 residues: NAD kinase (292 aa).

Aspartate 73 (proton acceptor) is an active-site residue. Residues 73–74 (DG), 147–148 (NE), histidine 158, arginine 175, aspartate 177, 188–193 (TAYSLS), and glutamine 247 each bind NAD(+).

Belongs to the NAD kinase family. It depends on a divalent metal cation as a cofactor.

It localises to the cytoplasm. The catalysed reaction is NAD(+) + ATP = ADP + NADP(+) + H(+). In terms of biological role, involved in the regulation of the intracellular balance of NAD and NADP, and is a key enzyme in the biosynthesis of NADP. Catalyzes specifically the phosphorylation on 2'-hydroxyl of the adenosine moiety of NAD to yield NADP. The protein is NAD kinase of Erwinia tasmaniensis (strain DSM 17950 / CFBP 7177 / CIP 109463 / NCPPB 4357 / Et1/99).